Here is a 116-residue protein sequence, read N- to C-terminus: Large ribosomal subunit protein uL18 (116 aa).

This sequence belongs to the universal ribosomal protein uL18 family. In terms of assembly, part of the 50S ribosomal subunit; part of the 5S rRNA/L5/L18/L25 subcomplex. Contacts the 5S and 23S rRNAs.

In terms of biological role, this is one of the proteins that bind and probably mediate the attachment of the 5S RNA into the large ribosomal subunit, where it forms part of the central protuberance. The polypeptide is Large ribosomal subunit protein uL18 (Chromohalobacter salexigens (strain ATCC BAA-138 / DSM 3043 / CIP 106854 / NCIMB 13768 / 1H11)).